The sequence spans 305 residues: Peroxisome assembly protein 26 (305 aa).

Positions 1-25 (MKSDCSTSAAPFRGLGGPLRSSEPV) are disordered. At 1–246 (MKSDCSTSAA…RQLWDSAVSH (246 aa)) the chain is on the cytoplasmic side. Residues 247–267 (FFSLPFKKSLLAALILCLLVV) traverse the membrane as a helical; Signal-anchor for type II membrane protein segment. The Peroxisomal matrix portion of the chain corresponds to 268-305 (RFDPASPSSLPSLYKLAQLFRWIRKAASSRLYQLRIRD).

It belongs to the peroxin-26 family. Interacts (via its cytoplasmic domain) with PEX6; interaction is direct and is ATP-dependent. Interacts with PEX1; interaction is indirect and is mediated via interaction with PEX6.

The protein localises to the peroxisome membrane. In terms of biological role, peroxisomal docking factor that anchors PEX1 and PEX6 to peroxisome membranes. PEX26 is therefore required for the formation of the PEX1-PEX6 AAA ATPase complex, a complex that mediates the extraction of the PEX5 receptor from peroxisomal membrane. The protein is Peroxisome assembly protein 26 (PEX26) of Macaca fascicularis (Crab-eating macaque).